Here is a 1767-residue protein sequence, read N- to C-terminus: Endo-alpha-N-acetylgalactosaminidase (1767 aa).

The N-terminal stretch at 1–39 is a signal peptide; the sequence is MNKGLFEKRCKYSIRKFSLGVASVMIGATFFGTSPVLAD. 2 stretches are compositionally biased toward basic and acidic residues: residues 63-75 and 84-111; these read NDGH…KVGE and DGPK…DKPA. Disordered regions lie at residues 63 to 137 and 301 to 324; these read NDGH…QGTV and VKTD…GPEV. The span at 112-124 shows a compositional bias: low complexity; the sequence is AAKPETPKTVTPE. Basic and acidic residues-rich tracts occupy residues 127 to 137 and 304 to 324; these read TVEKKEQQGTV and DNQE…GPEV. Ca(2+) contacts are provided by D577, N579, D581, K583, and D588. The interval 602 to 893 is catalytic; it reads GWKKVKDITA…DVMTKYFQHF (292 aa). D658 serves as a coordination point for substrate. D764 (nucleophile) is an active-site residue. E796 functions as the Proton donor/acceptor in the catalytic mechanism. Residues D1233, E1235, E1281, W1284, and D1411 each coordinate Ca(2+). Residues 1735-1739 carry the LPXTG sorting signal motif; sequence LPATG. Pentaglycyl murein peptidoglycan amidated threonine is present on T1738. A propeptide spans 1739–1767 (removed by sortase); sequence GESQFDTALFLASVSLALSALFVVKTKKD.

It belongs to the glycosyl hydrolase 101 family. A subfamily.

The protein resides in the secreted. Its subcellular location is the cell wall. The enzyme catalyses a 3-O-[beta-D-galactosyl-(1-&gt;3)-N-acetyl-alpha-D-galactosaminyl]-L-threonyl-[protein] + H2O = beta-D-galactosyl-(1-&gt;3)-N-acetyl-D-galactosamine + L-threonyl-[protein]. It carries out the reaction a 3-O-[beta-D-galactosyl-(1-&gt;3)-N-acetyl-alpha-D-galactosaminyl]-L-seryl-[protein] + H2O = beta-D-galactosyl-(1-&gt;3)-N-acetyl-D-galactosamine + L-seryl-[protein]. Involved in the breakdown of mucin-type O-linked glycans. Specifically removes the T-antigen disaccharide (Gal-beta-1,3-GalNAc-alpha) from extracellular host glycoproteins. Representative of a broadly important class of virulence factors. In Streptococcus pneumoniae (strain ATCC BAA-255 / R6), this protein is Endo-alpha-N-acetylgalactosaminidase.